A 269-amino-acid chain; its full sequence is Type II iodothyronine deiodinase (269 aa).

Over 1-9 (MGILSVDLL) the chain is Lumenal. Residues 10 to 34 (ITLQILPVFFSNCLFLALYDSVILL) form a helical; Signal-anchor for type III membrane protein membrane-spanning segment. Over 35–269 (KHVVLLLSRS…KNFSKRUKLD (235 aa)) the chain is Cytoplasmic. The interval 83-103 (NSSVVHVSSPEGGDTSGNGAQ) is disordered. Sec-133 is a catalytic residue. 2 non-standard amino acids (selenocysteine) are found at residues Sec-133 and Sec-266.

It belongs to the iodothyronine deiodinase family. In terms of assembly, predominantly monomer. Can form homodimers but homodimerization is not essential for enzyme activity. Interacts with USP20 and USP33. Interacts with MARCHF6. Post-translationally, ubiquitinated by MARCHF6, leading to its degradation by the proteasome. Deubiquitinated by USP20 and USP33. As to expression, highly expressed in thyroid, mammary and pituitary glands, then in hypothalamus. Low levels detected in diaphragm, heart, kidney and lung.

The protein resides in the endoplasmic reticulum membrane. It catalyses the reaction 3,3',5-triiodo-L-thyronine + iodide + A + H(+) = L-thyroxine + AH2. The catalysed reaction is 3,3'-diiodo-L-thyronine + iodide + A + H(+) = 3,3',5'-triiodo-L-thyronine + AH2. The enzyme catalyses 3'-iodo-L-thyronine + iodide + A + H(+) = 3',5'-diiodo-L-thyronine + AH2. It carries out the reaction 3,3'-diiodothyronamine + iodide + A + H(+) = 3,3',5'-triiodothyronamine + AH2. It catalyses the reaction 3'-iodothyronamine + iodide + A + H(+) = 3',5'-diiodothyronamine + AH2. Plays a crucial role in the metabolism of thyroid hormones (TH) and has specific roles in TH activation and inactivation by deiodination. Catalyzes the deiodination of L-thyroxine (T4) to 3,5,3'-triiodothyronine (T3), 3,3',5'-triiodothyronine (rT3) to 3,3'-diiodothyronine (3,3'-T2) and 3',5'-diiodothyronine (3',5'-T2) to 3'-monoiodothyronine (3'-T1) via outer-ring deiodination (ORD). Catalyzes the phenolic ring deiodinations of 3,3',5'-triiodothyronamine and 3',5'- diiodothyronamine. This Bos taurus (Bovine) protein is Type II iodothyronine deiodinase (DIO2).